Here is an 89-residue protein sequence, read N- to C-terminus: Small ribosomal subunit protein uS17 (89 aa).

This sequence belongs to the universal ribosomal protein uS17 family. As to quaternary structure, part of the 30S ribosomal subunit.

In terms of biological role, one of the primary rRNA binding proteins, it binds specifically to the 5'-end of 16S ribosomal RNA. The sequence is that of Small ribosomal subunit protein uS17 from Chlorobaculum tepidum (strain ATCC 49652 / DSM 12025 / NBRC 103806 / TLS) (Chlorobium tepidum).